The primary structure comprises 215 residues: N-(5'-phosphoribosyl)anthranilate isomerase (215 aa).

This sequence belongs to the TrpF family.

The enzyme catalyses N-(5-phospho-beta-D-ribosyl)anthranilate = 1-(2-carboxyphenylamino)-1-deoxy-D-ribulose 5-phosphate. The protein operates within amino-acid biosynthesis; L-tryptophan biosynthesis; L-tryptophan from chorismate: step 3/5. The chain is N-(5'-phosphoribosyl)anthranilate isomerase from Cellvibrio japonicus (strain Ueda107) (Pseudomonas fluorescens subsp. cellulosa).